The sequence spans 446 residues: Phosphoglucosamine mutase (446 aa).

Ser-101 acts as the Phosphoserine intermediate in catalysis. The Mg(2+) site is built by Ser-101, Asp-240, Asp-242, and Asp-244. Position 101 is a phosphoserine (Ser-101).

This sequence belongs to the phosphohexose mutase family. Requires Mg(2+) as cofactor. In terms of processing, activated by phosphorylation.

It carries out the reaction alpha-D-glucosamine 1-phosphate = D-glucosamine 6-phosphate. Functionally, catalyzes the conversion of glucosamine-6-phosphate to glucosamine-1-phosphate. This Pseudomonas entomophila (strain L48) protein is Phosphoglucosamine mutase.